Reading from the N-terminus, the 121-residue chain is Basic phospholipase A2 (121 aa).

7 cysteine pairs are disulfide-bonded: C26–C114, C28–C44, C43–C94, C49–C121, C50–C87, C57–C80, and C74–C85. Positions 27, 29, and 31 each coordinate Ca(2+). H47 is an active-site residue. D48 is a binding site for Ca(2+). Residue D88 is part of the active site.

As to quaternary structure, homopentamer. Ca(2+) serves as cofactor. Expressed by the venom gland.

Its subcellular location is the secreted. It carries out the reaction a 1,2-diacyl-sn-glycero-3-phosphocholine + H2O = a 1-acyl-sn-glycero-3-phosphocholine + a fatty acid + H(+). Snake venom phospholipase A2 (PLA2) that displays moderate myotoxic activity in vivo, and cytotoxic activity in vitro. In vitro, shows anticoagulant activity on human plasma and in mice causes inflammatory cell infiltration and myonecrosis in the gastrocnemius muscles of CD-1 mice 3 hours after injection (100 ug). PLA2 catalyzes the calcium-dependent hydrolysis of the 2-acyl groups in 3-sn-phosphoglycerides. The polypeptide is Basic phospholipase A2 (Porthidium ophryomegas (Slender hognose viper)).